Reading from the N-terminus, the 284-residue chain is tRNA pseudouridine synthase A (284 aa).

D52 (nucleophile) is an active-site residue. Residue Y149 participates in substrate binding.

This sequence belongs to the tRNA pseudouridine synthase TruA family. In terms of assembly, homodimer.

The enzyme catalyses uridine(38/39/40) in tRNA = pseudouridine(38/39/40) in tRNA. Its function is as follows. Formation of pseudouridine at positions 38, 39 and 40 in the anticodon stem and loop of transfer RNAs. In Orientia tsutsugamushi (strain Boryong) (Rickettsia tsutsugamushi), this protein is tRNA pseudouridine synthase A.